We begin with the raw amino-acid sequence, 285 residues long: Bifunctional protein FolD (285 aa).

Residues 165–167 (GRS) and Ser190 contribute to the NADP(+) site.

Belongs to the tetrahydrofolate dehydrogenase/cyclohydrolase family. In terms of assembly, homodimer.

It carries out the reaction (6R)-5,10-methylene-5,6,7,8-tetrahydrofolate + NADP(+) = (6R)-5,10-methenyltetrahydrofolate + NADPH. The enzyme catalyses (6R)-5,10-methenyltetrahydrofolate + H2O = (6R)-10-formyltetrahydrofolate + H(+). The protein operates within one-carbon metabolism; tetrahydrofolate interconversion. Its function is as follows. Catalyzes the oxidation of 5,10-methylenetetrahydrofolate to 5,10-methenyltetrahydrofolate and then the hydrolysis of 5,10-methenyltetrahydrofolate to 10-formyltetrahydrofolate. The chain is Bifunctional protein FolD from Burkholderia pseudomallei (strain 1710b).